We begin with the raw amino-acid sequence, 404 residues long: Tripartite motif-containing 13 (404 aa).

The RING-type zinc-finger motif lies at 10–56 (CPICCCLFEDPRVLPCSHSFCKKCLEGILDGNRSPTWRPPFKCPTCR). The B box-type zinc-finger motif lies at 87 to 129 (PRMSQCRVHSGQPLNIFCATDLKLICGFCATTGDHKGHKFCAL). Residues C92, H95, C115, and H121 each contribute to the Zn(2+) site. The helical transmembrane segment at 102 to 119 (IFCATDLKLICGFCATTG) threads the bilayer. A coiled-coil region spans residues 186-236 (KLLRTLEHKRSEILSDLETLKLAVMQTFDPEINRLRSALEEQRRALNIAES).

It localises to the endoplasmic reticulum membrane. It functions in the pathway protein modification; protein ubiquitination. E3 ubiquitin ligase involved in the retrotranslocation and turnover of membrane and secretory proteins from the ER through a set of processes named ER-associated degradation (ERAD). This process acts on misfolded proteins as well as in the regulated degradation of correctly folded proteins. This Danio rerio (Zebrafish) protein is Tripartite motif-containing 13 (trim13).